The primary structure comprises 2115 residues: Nuclear mitotic apparatus protein 1 (2115 aa).

Residues 1 to 212 (MTLHATRGAA…SPMGDILQTP (212 aa)) are head (Globular). The residue at position 162 (S162) is a Phosphoserine. T163 carries the phosphothreonine modification. Residues S169 and S203 each carry the phosphoserine modification. T211 bears the Phosphothreonine mark. A coiled-coil region spans residues 213–1699 (QFQMRRLKKQ…ADQQLRDLGK (1487 aa)). S271 carries the post-translational modification Phosphoserine. K379 carries the N6-acetyllysine modification. Phosphoserine is present on residues S388 and S395. A compositionally biased stretch (low complexity) spans 549–560 (LRHQVEQLSSSL). Disordered regions lie at residues 549–593 (LRHQ…EERE) and 746–766 (LVEQ…GRKG). Residues 561–581 (KQKEQQLKEVAEKQEATRQDH) are compositionally biased toward basic and acidic residues. S820 bears the Phosphoserine mark. An N6-acetyllysine modification is found at K891. 2 stretches are compositionally biased toward basic and acidic residues: residues 926–950 (AGEQ…RQPE) and 996–1013 (QEER…TQER). Disordered regions lie at residues 926-958 (AGEQ…QQGR) and 988-1013 (LMES…TQER). T1047 carries the post-translational modification Phosphothreonine; by PLK1. Positions 1090–1102 (LKEQLAKKEKEHA) are enriched in basic and acidic residues. Disordered stretches follow at residues 1090 to 1225 (LKEQ…RKNS) and 1275 to 1296 (ETAS…EVQS). Composition is skewed to low complexity over residues 1103–1112 (SGSGAQSEAA) and 1133–1142 (EQQCQKQQEQ). The span at 1145 to 1163 (SLERSLEAERASRAERDSA) shows a compositional bias: basic and acidic residues. At S1187 the chain carries Phosphoserine. The span at 1198-1224 (KVQDHSKAEDEWKAQVARGRQEAERKN) shows a compositional bias: basic and acidic residues. The residue at position 1225 (S1225) is a Phosphoserine. The segment covering 1283–1296 (AAERSSALREEVQS) has biased composition (basic and acidic residues). K1511 carries the post-translational modification N6-acetyllysine. S1601 bears the Phosphoserine mark. K1699 participates in a covalent cross-link: Glycyl lysine isopeptide (Lys-Gly) (interchain with G-Cter in SUMO2). Residues 1699 to 1876 (KFQVATDALK…NSALLSLPGY (178 aa)) are membrane-binding domain 1. A tail (Globular) region spans residues 1700-2115 (FQVATDALKS…TPRAKGKAKH (416 aa)). S1721, S1724, and S1728 each carry phosphoserine. The disordered stretch occupies residues 1734–1761 (PLSITSKLPRTQPDGTSVPGEPASPISQ). Positions 1735 to 1748 (LSITSKLPRTQPDG) are enriched in polar residues. The short motif at 1742–1748 (PRTQPDG) is the Tankyrase-binding domain element. Phosphoserine is present on residues S1757 and S1760. A Glycyl lysine isopeptide (Lys-Gly) (interchain with G-Cter in SUMO1); alternate cross-link involves residue K1766. K1766 participates in a covalent cross-link: Glycyl lysine isopeptide (Lys-Gly) (interchain with G-Cter in SUMO2); alternate. A phosphoserine; by PLK1 mark is found at S1769 and S1772. Position 1774 is a phosphotyrosine (Y1774). T1776 is modified (phosphothreonine). S1788 carries the post-translational modification Phosphoserine. Positions 1788 to 1810 (SSLDSLGDVFLDSGRKTRSARRR) are 4.1-binding domain. The residue at position 1789 (S1789) is a Phosphoserine; by PLK1. A phosphoserine mark is found at S1792 and S1800. T1804 carries the phosphothreonine modification. Residue K1822 forms a Glycyl lysine isopeptide (Lys-Gly) (interchain with G-Cter in SUMO2) linkage. Disordered regions lie at residues 1826-1901 (EEPD…GRNS) and 1955-2115 (EMKT…KAKH). Phosphoserine is present on residues S1830 and S1833. Residues 1830–1857 (SANSSFYSTRSAPASQASLRATSSTQSL) show a composition bias toward polar residues. S1834 bears the Phosphoserine; by PLK1 mark. Y1836 carries the phosphotyrosine modification. The residue at position 1840 (S1840) is a Phosphoserine. A Phosphoserine; alternate modification is found at S1844. Residue S1844 is glycosylated (O-linked (GlcNAc) serine; alternate). 2 positions are modified to phosphoserine: S1862 and S1887. Positions 1879–1891 (TTRSSARRSQAGV) are enriched in polar residues. A tubulin-binding domain region spans residues 1882–1985 (SSARRSQAGV…AEGTGITTRQ (104 aa)). Residues 1892–1926 (SSGAPPGRNSFYMGTCQDEPEQLDDWNRIAELQQR) form a GPSM2-binding domain region. Residues 1955 to 1966 (EMKTGDPQETLR) show a composition bias toward basic and acidic residues. Phosphoserine is present on S1969. Residues 1981–2060 (ITTRQQRKRV…SILNTPKKLG (80 aa)) form a membrane-binding domain 2 region. The Nuclear localization signal signature appears at 1984–1989 (RQQRKR). S1991 is modified (phosphoserine). Phosphothreonine is present on T2000. S2003 is modified (phosphoserine). The residue at position 2015 (T2015) is a Phosphothreonine; by CDK1. The segment covering 2015–2032 (TPRDRHEGRKQSTTEAQK) has biased composition (basic and acidic residues). A Phosphoserine modification is found at S2047. At T2055 the chain carries Phosphothreonine; by CDK1. A phosphoserine mark is found at S2062 and S2077. Residue S2087 is modified to Phosphoserine; by CDK1. Residues 2089–2108 (RIATTTASAATAAAIGATPR) are compositionally biased toward low complexity. T2106 carries the post-translational modification Phosphothreonine; by CDK1.

As to quaternary structure, homodimer. Also forms multiarm oligomers by association of C-terminal tail domains, oligomers may further assemble to form a hexagonal nuclear lattice-like network. Associates with the dynein-dynactin complex; this association promotes the transport and accumulation of NUMA1 at the mitotic spindle poles that is inhibited by the BRISC complex in a PLK1-dependent manner. Part of a spindle orientation complex at least composed of GNAI1, GPSM2 and NUMA1. Interacts (via C-terminus) with microtubules (MTs); this interaction is direct and promotes both MT bundle formation and stability in a dynein-dynactin complex- and CDK1-independent manner. Interacts with EPB41 and EPB41L2; these interactions are negatively regulated by CDK1 during metaphase and are important for anaphase-specific localization of NUMA1 in symmetrically dividing cells. Interacts (via C-terminus) with GPSM2 (via TPR repeats); this interaction is direct, prevented by competitive binding of INSC, is inhibited in a PLK1-dependent manner, blocks the association of NUMA1 with MTs and inhibits NUMA1-induced MT bundle formation, prevents the association of NUMA1 with SPAG5, induces mitotic spindle pole localization of GPSM2, both metaphase cell cortex localization of NUMA1 and mitotic spindle organization. Does not interact with GPSM2 during anaphase. Interacts (via C-terminus) with the nuclear importin alpha/importin beta receptor; this interaction is inhibited by RanGTP. Interacts (via C-terminus) with KPNB1; this interaction is inhibited by RanGTP and the BRISC complex. Interacts with ABRAXAS2 and the BRISC complex; these interactions regulate mitotic spindle assembly. Interacts (via N-terminal end of the coiled-coil domain) with RAE1; this interaction promotes mitotic spindle formation. Interacts (via C-terminus) with SPAG5 (via C-terminus); this interaction promotes the recruitment of SPAG5 to the MTs at spindle poles in a dynein-dynactin-dependent manner and regulates mitotic spindle organization and proper chromosome alignment during mitosis. Interacts with TNKS; this interaction occurs at the onset of mitosis. Interacts with TNKS2. Interacts with tubulin. Interacts with KHDC3L (via C-terminus). Post-translationally, phosphorylation and dephosphorylation on Thr-2055 regulates the extent of cortical NUMA1 and the dynein-dynactin complex localization during mitotic metaphase and anaphase. In metaphase, phosphorylation on Thr-2055 occurs in a kinase CDK1-dependent manner; this phosphorylation maintains low levels of cortical dynein-dynactin complex at metaphase, and hence proper spindle positioning. In anaphase, dephosphorylated on Thr-2055 by phosphatase PPP2CA; this dephosphorylation stimulates its membrane association and with the dynein-dynactin complex its enrichment at the cell cortex, and hence robust spindle elongation. Probably also phosphorylated on Thr-2015 and Ser-2087 by CDK1; these phosphorylations may regulate its cell cortex recruitment during metaphase and anaphase. Phosphorylated on Thr-1047, Ser-1769, Ser-1772, Ser-1789 and Ser-1834 by PLK1; these phosphorylations induce cortical dynein-dynactin complex dissociation from the NUMA1-GPSM2 complex and negatively regulates cortical dynein-dynactin complex localization. ADP-ribosylated by TNKS at the onset of mitosis; ADP-ribosylation is not required for its localization to spindle poles. In terms of processing, O-glycosylated during cytokinesis at sites identical or close to phosphorylation sites, this interferes with the phosphorylation status. Post-translationally, ubiquitinated with 'Lys-63'-linked polyubiquitin chains. Deubiquitination by the BRISC complex is important for the incorporation of NUMA1 into mitotic spindle poles and normal spindle pole function, probably by modulating interactions between NUMA1, dynein-dynactin complex and importin-beta.

The protein localises to the nucleus. It is found in the nucleoplasm. It localises to the nucleus matrix. Its subcellular location is the chromosome. The protein resides in the cytoplasm. The protein localises to the cytoskeleton. It is found in the microtubule organizing center. It localises to the centrosome. Its subcellular location is the spindle pole. The protein resides in the cell cortex. The protein localises to the cell membrane. It is found in the lateral cell membrane. It localises to the cytosol. In terms of biological role, microtubule (MT)-binding protein that plays a role in the formation and maintenance of the spindle poles and the alignement and the segregation of chromosomes during mitotic cell division. Functions to tether the minus ends of MTs at the spindle poles, which is critical for the establishment and maintenance of the spindle poles. Plays a role in the establishment of the mitotic spindle orientation during metaphase and elongation during anaphase in a dynein-dynactin-dependent manner. In metaphase, part of a ternary complex composed of GPSM2 and G(i) alpha proteins, that regulates the recruitment and anchorage of the dynein-dynactin complex in the mitotic cell cortex regions situated above the two spindle poles, and hence regulates the correct oritentation of the mitotic spindle. During anaphase, mediates the recruitment and accumulation of the dynein-dynactin complex at the cell membrane of the polar cortical region through direct association with phosphatidylinositol 4,5-bisphosphate (PI(4,5)P2), and hence participates in the regulation of the spindle elongation and chromosome segregation. Also binds to other polyanionic phosphoinositides, such as phosphatidylinositol 3-phosphate (PIP), lysophosphatidic acid (LPA) and phosphatidylinositol triphosphate (PIP3), in vitro. Also required for proper orientation of the mitotic spindle during asymmetric cell divisions. Plays a role in mitotic MT aster assembly. Involved in anastral spindle assembly. Positively regulates TNKS protein localization to spindle poles in mitosis. Highly abundant component of the nuclear matrix where it may serve a non-mitotic structural role, occupies the majority of the nuclear volume. Required for epidermal differentiation and hair follicle morphogenesis. The polypeptide is Nuclear mitotic apparatus protein 1 (Homo sapiens (Human)).